The primary structure comprises 1319 residues: Uromodulin-like 1 (1319 aa).

The first 22 residues, 1–22 (MMSRTVRLVLLALACTVDLSQA), serve as a signal peptide directing secretion. Over 23–1273 (SGFTENGLSL…CTKPVLGTGY (1251 aa)) the chain is Extracellular. Residues 34–107 (SYQLCSYPVT…FEQLGLYCVL (74 aa)) form the EMI domain. Cystine bridges form between Cys38–Cys95, Cys62–Cys71, and Cys94–Cys105. A glycan (N-linked (GlcNAc...) asparagine) is linked at Asn90. Asn110 carries N-linked (GlcNAc...) asparagine glycosylation. Positions 115–159 (FASRPGVCPTAEAEPLSPSCSLDTDCSGLQKCCSWPGGRHCVSPT) constitute a WAP domain. 3 N-linked (GlcNAc...) asparagine glycosylation sites follow: Asn172, Asn193, and Asn243. Positions 265-306 (DVNECLHSELQACSVREQCRNLEGSYQCVSSQRLNHTDEDCP) constitute an EGF-like 1; calcium-binding domain. 2 disulfide bridges follow: Cys269–Cys283 and Cys277–Cys292. Residues 307–391 (PIRDFVALNV…ATLVVKTDAQ (85 aa)) enclose the Fibronectin type-III 1 domain. N-linked (GlcNAc...) asparagine glycosylation is present at Asn315. Residues 389–503 (DAQVFQVTIR…QRTFVQDWDE (115 aa)) form the SEA 1 domain. Positions 500-545 (DWDECAHSSEHDCHPSARCINLEGSYTCQCLTARDASPSRAGRVCE) constitute an EGF-like 2; calcium-binding domain. Disulfide bonds link Cys504–Cys518, Cys512–Cys527, and Cys529–Cys544. Disordered regions lie at residues 569 to 649 (TGIT…ITKD) and 664 to 703 (HSSPTWKTPPNSTRLQNEDPRSSSFPGPPSAPTDVTPESP). Positions 619–632 (TGQGQTHGTHQGTT) are enriched in low complexity. The span at 638–647 (TTRESQELIT) shows a compositional bias: basic and acidic residues. Positions 664 to 678 (HSSPTWKTPPNSTRL) are enriched in polar residues. One can recognise a Fibronectin type-III 2 domain in the interval 709 to 795 (PIGKVTVSNV…QLKVRTVAQK (87 aa)). N-linked (GlcNAc...) asparagine glycans are attached at residues Asn717 and Asn757. The SEA 2 domain maps to 792-904 (VAQKLAGNVR…GKTFMQDYNE (113 aa)). An EGF-like 3; calcium-binding domain is found at 901–945 (DYNECDMKEDDCAPGTCRNTFGSFTCSCDEGGPDSQVEYSGRSCD). Cystine bridges form between Cys905/Cys917, Cys912/Cys926, and Cys928/Cys944. The segment at 939-966 (YSGRSCDGDPSGNMTQTPGSEWSPTPAG) is disordered. Polar residues predominate over residues 950 to 961 (GNMTQTPGSEWS). A glycan (N-linked (GlcNAc...) asparagine) is linked at Asn951. The ZP domain maps to 995–1238 (SCEIETVIIT…NSCRISCNDF (244 aa)). Cys1160 and Cys1218 are oxidised to a cystine. A helical transmembrane segment spans residues 1274–1294 (IILLAAAALLVVAGATTLLIL). Residues 1295–1319 (RYQRVRQKYNLRIQTDDFSYQVFSQ) lie on the Cytoplasmic side of the membrane.

It localises to the cell membrane. In Mus musculus (Mouse), this protein is Uromodulin-like 1 (Umodl1).